The following is a 97-amino-acid chain: Eotaxin (97 aa).

A signal peptide spans Met1 to Ala23. Disulfide bonds link Cys32–Cys57 and Cys33–Cys73. Thr94 carries an O-linked (GalNAc...) threonine glycan.

It belongs to the intercrine beta (chemokine CC) family. As to expression, expressed constitutively in the thymus. Expression inducible in the lung (type I alveolar epithelial cells), intestine, heart, spleen, kidney.

It localises to the secreted. Its function is as follows. In response to the presence of allergens, this protein directly promotes the accumulation of eosinophils (a prominent feature of allergic inflammatory reactions), but not lymphocytes, macrophages or neutrophils. Binds to CCR3. The chain is Eotaxin (Ccl11) from Mus musculus (Mouse).